The chain runs to 366 residues: Cytochrome c peroxidase, mitochondrial (366 aa).

The active-site Proton acceptor is the His123. A compositionally biased stretch (basic and acidic residues) spans 195-206; that stretch reads IEWRPGRVDDNT. Residues 195-218 are disordered; that stretch reads IEWRPGRVDDNTASKVPPNGRLPD. Heme b is bound at residue His247. Residue Trp263 is the Tryptophan radical intermediate of the active site.

Belongs to the peroxidase family. Cytochrome c peroxidase subfamily. In terms of assembly, forms a one-to-one complex with cytochrome c. Requires heme b as cofactor.

The protein localises to the mitochondrion matrix. Its subcellular location is the mitochondrion intermembrane space. The enzyme catalyses 2 Fe(II)-[cytochrome c] + H2O2 + 2 H(+) = 2 Fe(III)-[cytochrome c] + 2 H2O. Destroys radicals which are normally produced within the cells and which are toxic to biological systems. This Candida albicans (strain SC5314 / ATCC MYA-2876) (Yeast) protein is Cytochrome c peroxidase, mitochondrial (CCP1).